We begin with the raw amino-acid sequence, 314 residues long: MPGFTCCVPGCYNNSHRDKALHFYTFPKDAELRRLWLKNVSRAGVSGCFSTFQPTTGHRLCSVHFQGGRKTYTVRVPTIFPLRGVNERKVARRPAGAAAARRRQQQQQQQQQQQQQQQQQQQQQQQQQQQQQSSPSASTAQTAQLQPNLVSASAAVLLTLQATVDSSQAPGSVQPAPITPTGEDVKPIDLTVQVEFAAAEGAAAAAAASELQAATAGLEAAECPMGPQLVVVGEEGFPDTGSDHSYSLSSGTTEEELLRKLNEQRDILALMEVKMKEMKGSIRHLRLTEAKLREELREKDRLLAMAVIRKKHGM.

The THAP-type zinc-finger motif lies at 1 to 80; it reads MPGFTCCVPG…TYTVRVPTIF (80 aa). The interval 85–111 is disordered; it reads VNERKVARRPAGAAAARRRQQQQQQQQ. The segment covering 93-111 has biased composition (low complexity); it reads RPAGAAAARRRQQQQQQQQ. The HCFC1-binding motif (HBM) signature appears at 243–246; sequence DHSY. Positions 255-305 form a coiled coil; it reads EELLRKLNEQRDILALMEVKMKEMKGSIRHLRLTEAKLREELREKDRLLAM.

Belongs to the THAP11 family. Forms homodimers. Interacts via HBM with HCFC1. Forms a complex with HCFC1 and ZNF143. In terms of tissue distribution, expressed in skin fibroblasts.

It localises to the nucleus. It is found in the cytoplasm. Transcription factor, which has both transcriptional activation and repression activities. Also modulates chromatin accessibility. In complex with HCFC1 and ZNF143, regulates the expression of several genes, including AP2S1, ESCO2, OPHN1, RBL1, UBXN8 and ZNF32. May regulate the expression of genes that encode both cytoplasmic and mitochondrial ribosomal proteins. Required for normal mitochondrial development and function. Regulates mitochondrial gene expression, including that of components of the electron transport chain. Involved in the maintainance of pluripotency in early embryonic cells, possibly through its action on mitochondrial maturation which is required to meet high energy demands of these cells. Required for early development of retina, preventing premature exit of retinal progenitor cells from the cell cycle. This effect may also be mediated by its action on mitochondria. Through the regulation of MMACHC gene expression, controls cobalamin metabolism. Required for normal brain development and neural precursor differentiation. Involved in cell growth. In Homo sapiens (Human), this protein is THAP domain-containing protein 11 (THAP11).